A 520-amino-acid chain; its full sequence is Transcription factor MYB33 (520 aa).

Residues 1–24 (MSYTSTDSDHNESPAADDNGSDCR) form a disordered region. HTH myb-type domains are found at residues 29–81 (GHAL…ANHL) and 82–136 (RPNL…KRRQ). 2 DNA-binding regions (H-T-H motif) span residues 57–81 (WNAVQKHTSLFRCGKSCRLRWANHL) and 109–132 (WARMAAHLPGRTDNEIKNYWNTRI). Positions 331 to 342 (SSSPPHSDLLDP) are enriched in low complexity. 2 disordered regions span residues 331 to 359 (SSSPPHSDLLDPFDTYIQSPPPPTGGEES) and 426 to 447 (EMSTQNADETPPRQREKKRKPL).

In terms of tissue distribution, mostly expressed in stems, shoot apices, flowers and floral shoot tips, and, to a lower extent, in roots (e.g. root tips), seedlings, leaves and siliques.

Its subcellular location is the nucleus. Its function is as follows. Transcriptional activator of alpha-amylase expression that binds to 5'-CAACTGTC-3' motif in target gene promoter. Positive regulator of abscisic acid (ABA) responses leading to growth arrest during seed germination. In vegetative tissues, inhibits growth by reducing cell proliferation. Promotes the expression of aleurone-related genes (e.g. CP1, CP, GASA1, BXL1 and BXL2) in seeds. Together with MYB65 and MYB101, promotes the programmed cell death (PCD) the vacuolation of protein storage vacuoles (PSVs) in the aleurone layers during seed germination. Binds to a GARE site (GA-response element) in the LEAFY promoter, essential for its gibberellic acid (GA)-mediated induction. Together with MYB65, facilitates anther and tapetum development. This is Transcription factor MYB33 from Arabidopsis thaliana (Mouse-ear cress).